A 67-amino-acid polypeptide reads, in one-letter code: Probable Sec-independent protein translocase protein TatE (67 aa).

The chain crosses the membrane as a helical span at residues 4–21 (ISITKLLVVAALVVLLFG).

Belongs to the TatA/E family. TatE subfamily.

Its subcellular location is the cell inner membrane. Its function is as follows. Part of the twin-arginine translocation (Tat) system that transports large folded proteins containing a characteristic twin-arginine motif in their signal peptide across membranes. TatE shares overlapping functions with TatA. The polypeptide is Probable Sec-independent protein translocase protein TatE (Salmonella dublin (strain CT_02021853)).